The primary structure comprises 272 residues: Orotidine 5'-phosphate decarboxylase (272 aa).

Catalysis depends on K96, which acts as the Proton donor.

Belongs to the OMP decarboxylase family. Type 2 subfamily.

The catalysed reaction is orotidine 5'-phosphate + H(+) = UMP + CO2. The protein operates within pyrimidine metabolism; UMP biosynthesis via de novo pathway; UMP from orotate: step 2/2. The polypeptide is Orotidine 5'-phosphate decarboxylase (Phocaeicola vulgatus (strain ATCC 8482 / DSM 1447 / JCM 5826 / CCUG 4940 / NBRC 14291 / NCTC 11154) (Bacteroides vulgatus)).